We begin with the raw amino-acid sequence, 116 residues long: Somatostatin (116 aa).

An N-terminal signal peptide occupies residues 1 to 24; it reads MLSCRLQCALALLSIALAVGTVSA. A propeptide spanning residues 25–88 is cleaved from the precursor; it reads APSDPRLRQF…QDEVRLELER (64 aa). The disordered stretch occupies residues 60–82; it reads PSQTENEALESEDLSRGAEQDEV. Residues 72–82 show a composition bias toward basic and acidic residues; it reads DLSRGAEQDEV. Cys105 and Cys116 are disulfide-bonded.

This sequence belongs to the somatostatin family.

The protein localises to the secreted. Somatostatin inhibits the release of somatotropin. The polypeptide is Somatostatin (SST) (Gallus gallus (Chicken)).